We begin with the raw amino-acid sequence, 150 residues long: MEVILLSKIKKLGDSGAVINVKSGYARNFLIPKGKAILANKKNIESFEAQRIALEKEKINELLIAQSRAEKLKKINSITILSKVGKEGKIFGSVGVRNIIKEIILLGIKINKKEIRLPNGLLRQVGEHIVVFQPHSKVSINFIVKIIAKN.

Belongs to the bacterial ribosomal protein bL9 family.

Its function is as follows. Binds to the 23S rRNA. The chain is Large ribosomal subunit protein bL9 from Buchnera aphidicola subsp. Acyrthosiphon pisum (strain 5A).